A 411-amino-acid chain; its full sequence is Diels-Alderase ffsF (411 aa).

A signal peptide spans Met1–Ser17.

Belongs to the Diels-Alderase family.

Its pathway is mycotoxin biosynthesis. Its function is as follows. Diels-Alderase; part of the gene cluster that mediates the biosynthesis of the cytotoxic leucine-containing cytochalasans, including aspochalasin C, aspochalasin E, TMC-169, flavichalasine F, aspergillin PZ, aspochalasin M and flavichalasine G. The first step in the pathway is catalyzed by the hybrid PKS-NRPS ffsA that utilizes 8 units of malonyl-CoA to iteratively assemble the octaketide chain before addition of L-leucine by the C-terminal NRPS modules. Because ffsA lacks a designated enoylreductase (ER) domain, the required activity is provided the enoyl reductase fssC. The methyltransferase (MT) domain of ffsA catalyzes the alpha-methylation at C10 and C14 using S-adenosyl-L-methionine as the methyl-donating cosubstrate. Reduction by the hydrolyase ffsE, followed by dehydration and intra-molecular Diels-Alder cyclization by the Diels-Alderase ffsF then yield the required isoindolone-fused macrocycle. A number of oxidative steps catalyzed by the tailoring cytochrome P450 monooxygenase ffsD, the FAD-linked oxidoreductase ffsJ and the short-chain dehydrogenase/reductase ffsI, are further required to afford the final products. This Aspergillus flavipes protein is Diels-Alderase ffsF.